Reading from the N-terminus, the 622-residue chain is Membrane protein insertase YidC (622 aa).

Residues I6–E26 traverse the membrane as a helical segment. A disordered region spans residues T47 to R87. Positions L62–S83 are enriched in polar residues. The next 3 helical transmembrane spans lie at W381–A401, F451–V471, and P525–V545. The segment at T563–K622 is disordered. The segment covering V583–A596 has biased composition (polar residues). Basic residues predominate over residues R613–K622.

It belongs to the OXA1/ALB3/YidC family. Type 1 subfamily. As to quaternary structure, interacts with the Sec translocase complex via SecD. Specifically interacts with transmembrane segments of nascent integral membrane proteins during membrane integration.

It localises to the cell inner membrane. In terms of biological role, required for the insertion and/or proper folding and/or complex formation of integral membrane proteins into the membrane. Involved in integration of membrane proteins that insert both dependently and independently of the Sec translocase complex, as well as at least some lipoproteins. Aids folding of multispanning membrane proteins. The polypeptide is Membrane protein insertase YidC (Nitrosomonas eutropha (strain DSM 101675 / C91 / Nm57)).